Here is a 428-residue protein sequence, read N- to C-terminus: Enolase (428 aa).

Q163 provides a ligand contact to (2R)-2-phosphoglycerate. Catalysis depends on E205, which acts as the Proton donor. 3 residues coordinate Mg(2+): D242, E286, and D313. Positions 338, 367, 368, and 389 each coordinate (2R)-2-phosphoglycerate. The active-site Proton acceptor is K338.

This sequence belongs to the enolase family. Mg(2+) is required as a cofactor.

The protein localises to the cytoplasm. The protein resides in the secreted. It is found in the cell surface. It catalyses the reaction (2R)-2-phosphoglycerate = phosphoenolpyruvate + H2O. Its pathway is carbohydrate degradation; glycolysis; pyruvate from D-glyceraldehyde 3-phosphate: step 4/5. In terms of biological role, catalyzes the reversible conversion of 2-phosphoglycerate (2-PG) into phosphoenolpyruvate (PEP). It is essential for the degradation of carbohydrates via glycolysis. This Syntrophus aciditrophicus (strain SB) protein is Enolase.